A 385-amino-acid polypeptide reads, in one-letter code: Iron uptake system component EfeM (385 aa).

The signal sequence occupies residues 1–22; that stretch reads MNFTKIAVSAGCILALCAGCGA.

Belongs to the EfeM/EfeO family. In terms of assembly, component of the iron transporter efeUOB/M complex composed of EfeU, EfeM and EfeB; EfeU is essential for the complex formation.

The protein resides in the cell membrane. The protein localises to the membrane raft. Its function is as follows. Part of the iron transporter system efeUOB/M involved in iron import. Specifically binds Fe(3+), which is produced by EfeB-mediated oxidation of Fe(2+), and delivers it to the cell membrane permease EfeU. This is Iron uptake system component EfeM from Bacillus subtilis (strain 168).